Consider the following 552-residue polypeptide: CTP synthase (552 aa).

The interval 1-270 (MTKFVFVTGG…DGLICDKLRL (270 aa)) is amidoligase domain. Ser13 contributes to the CTP binding site. Ser13 is a UTP binding site. ATP contacts are provided by residues 14–19 (SLGKGI) and Asp71. Residues Asp71 and Glu144 each contribute to the Mg(2+) site. Residues 151–153 (DIE), 191–196 (KTKPTQ), and Lys227 contribute to the CTP site. Residues 191-196 (KTKPTQ) and Lys227 each bind UTP. Residues 295-548 (QIAMVGKYVE…IKAAVEHQKP (254 aa)) form the Glutamine amidotransferase type-1 domain. Gly357 is an L-glutamine binding site. The active-site Nucleophile; for glutamine hydrolysis is the Cys384. L-glutamine contacts are provided by residues 385–388 (LGMQ), Glu408, and Arg474. Residues His521 and Glu523 contribute to the active site.

Belongs to the CTP synthase family. As to quaternary structure, homotetramer.

The catalysed reaction is UTP + L-glutamine + ATP + H2O = CTP + L-glutamate + ADP + phosphate + 2 H(+). The enzyme catalyses L-glutamine + H2O = L-glutamate + NH4(+). It carries out the reaction UTP + NH4(+) + ATP = CTP + ADP + phosphate + 2 H(+). It functions in the pathway pyrimidine metabolism; CTP biosynthesis via de novo pathway; CTP from UDP: step 2/2. With respect to regulation, allosterically activated by GTP, when glutamine is the substrate; GTP has no effect on the reaction when ammonia is the substrate. The allosteric effector GTP functions by stabilizing the protein conformation that binds the tetrahedral intermediate(s) formed during glutamine hydrolysis. Inhibited by the product CTP, via allosteric rather than competitive inhibition. Its function is as follows. Catalyzes the ATP-dependent amination of UTP to CTP with either L-glutamine or ammonia as the source of nitrogen. Regulates intracellular CTP levels through interactions with the four ribonucleotide triphosphates. The chain is CTP synthase from Acidovorax ebreus (strain TPSY) (Diaphorobacter sp. (strain TPSY)).